Consider the following 152-residue polypeptide: Ribosome maturation factor RimP (152 aa).

It belongs to the RimP family.

The protein resides in the cytoplasm. Functionally, required for maturation of 30S ribosomal subunits. This Yersinia pestis protein is Ribosome maturation factor RimP.